Here is a 299-residue protein sequence, read N- to C-terminus: Bifunctional protein FolD 1 (299 aa).

NADP(+)-binding positions include 168-170 (GRS), S193, and I234.

The protein belongs to the tetrahydrofolate dehydrogenase/cyclohydrolase family. Homodimer.

It carries out the reaction (6R)-5,10-methylene-5,6,7,8-tetrahydrofolate + NADP(+) = (6R)-5,10-methenyltetrahydrofolate + NADPH. The catalysed reaction is (6R)-5,10-methenyltetrahydrofolate + H2O = (6R)-10-formyltetrahydrofolate + H(+). The protein operates within one-carbon metabolism; tetrahydrofolate interconversion. Catalyzes the oxidation of 5,10-methylenetetrahydrofolate to 5,10-methenyltetrahydrofolate and then the hydrolysis of 5,10-methenyltetrahydrofolate to 10-formyltetrahydrofolate. The protein is Bifunctional protein FolD 1 of Mesorhizobium japonicum (strain LMG 29417 / CECT 9101 / MAFF 303099) (Mesorhizobium loti (strain MAFF 303099)).